The primary structure comprises 183 residues: MATGPRYKVPMRRRREVRTDYHQRLRLLKSGKPRLVARKSNKHVTAQLVTTGPDGDETVASAHSSDLDAYGWAAPTGNLPAAYLTGLLAGQRAVDAGVEEAVLDIGLNTATPGSKVFAIQEGAIDAGLDVPHNDSVLADWSRTRGEHIAEYAESLDEPLYSGDFDATALPAHFDETREAIMED.

It belongs to the universal ribosomal protein uL18 family. Part of the 50S ribosomal subunit. Contacts the 5S and 23S rRNAs.

In terms of biological role, this is one of the proteins that bind and probably mediate the attachment of the 5S RNA into the large ribosomal subunit, where it forms part of the central protuberance. This is Large ribosomal subunit protein uL18 from Halobacterium salinarum (strain ATCC 29341 / DSM 671 / R1).